The sequence spans 211 residues: Small ribosomal subunit protein uS3 (211 aa).

One can recognise a KH type-2 domain in the interval 16–85; that stretch reads IDEYFKTKLV…NPQIEVKQVE (70 aa).

The protein belongs to the universal ribosomal protein uS3 family. Part of the 30S ribosomal subunit.

Functionally, binds the lower part of the 30S subunit head. This is Small ribosomal subunit protein uS3 from Methanococcus maripaludis (strain DSM 14266 / JCM 13030 / NBRC 101832 / S2 / LL).